We begin with the raw amino-acid sequence, 156 residues long: AP-1 complex subunit sigma-1 (156 aa).

The protein belongs to the adaptor complexes small subunit family. As to quaternary structure, adapter protein complex 1 (AP-1) is a heterotetramer composed of two large adaptins (gamma-type subunit APL4 and beta-type subunit APL2), a medium adaptin (mu-type subunit APM1) and a small adaptin (sigma-type subunit APS1). AP-1 interacts with clathrin. Also a component of the AP-1R complex composed of at least APM2, APL4 and APS1.

Its subcellular location is the cytoplasm. It localises to the nucleus. The protein localises to the cytoplasmic vesicle. It is found in the clathrin-coated vesicle membrane. The protein resides in the endosome. Its subcellular location is the golgi apparatus. Component of the adapter complexes which link clathrin to receptors in coated vesicles. Clathrin-associated protein complexes are believed to interact with the cytoplasmic tails of membrane proteins, leading to their selection and concentration. AP19 is probably a subunit of the Golgi membrane adapter. Component of the AP-1-related (AP-1R) complex, an adapter protein complex that mediates sorting of cargo SNARE SNC1. In contrast to the APM1-containing AP-1 complex, AP-1R is incapable of sorting CHS3. The polypeptide is AP-1 complex subunit sigma-1 (APS1) (Saccharomyces cerevisiae (strain ATCC 204508 / S288c) (Baker's yeast)).